We begin with the raw amino-acid sequence, 473 residues long: Argininosuccinate lyase (473 aa).

This sequence belongs to the lyase 1 family. Argininosuccinate lyase subfamily.

It localises to the cytoplasm. The catalysed reaction is 2-(N(omega)-L-arginino)succinate = fumarate + L-arginine. It participates in amino-acid biosynthesis; L-arginine biosynthesis; L-arginine from L-ornithine and carbamoyl phosphate: step 3/3. This Mycobacteroides abscessus (strain ATCC 19977 / DSM 44196 / CCUG 20993 / CIP 104536 / JCM 13569 / NCTC 13031 / TMC 1543 / L948) (Mycobacterium abscessus) protein is Argininosuccinate lyase.